We begin with the raw amino-acid sequence, 88 residues long: Small ribosomal subunit protein bS16 (88 aa).

This sequence belongs to the bacterial ribosomal protein bS16 family.

The sequence is that of Small ribosomal subunit protein bS16 from Anaeromyxobacter sp. (strain K).